The sequence spans 427 residues: Ectonucleoside triphosphate diphosphohydrolase 5 (427 aa).

The signal sequence occupies residues 1-24; the sequence is MATSWGAVFMLIIACVGSTVFYRE. Glu-171 functions as the Proton acceptor in the catalytic mechanism. N-linked (GlcNAc...) asparagine glycosylation occurs at Asn-231. Intrachain disulfides connect Cys-271/Cys-302 and Cys-362/Cys-376.

It belongs to the GDA1/CD39 NTPase family. Monomer; active form. Homodimer; disulfide-linked. Homodimers are enzymatically inactive. Ca(2+) serves as cofactor. It depends on Mg(2+) as a cofactor. N-glycosylated; high-mannose type. Ubiquitous.

The protein localises to the endoplasmic reticulum. Its subcellular location is the secreted. The enzyme catalyses a ribonucleoside 5'-diphosphate + H2O = a ribonucleoside 5'-phosphate + phosphate + H(+). It catalyses the reaction GDP + H2O = GMP + phosphate + H(+). It carries out the reaction UDP + H2O = UMP + phosphate + H(+). The catalysed reaction is IDP + H2O = IMP + phosphate + H(+). The enzyme catalyses CDP + H2O = CMP + phosphate + H(+). It catalyses the reaction ADP + H2O = AMP + phosphate + H(+). Its pathway is protein modification; protein glycosylation. Hydrolyzes nucleoside diphosphates with a preference for GDP, IDP and UDP compared to ADP and CDP. In the lumen of the endoplasmic reticulum, hydrolyzes UDP that acts as an end-product feedback inhibitor of the UDP-Glc:glycoprotein glucosyltransferases. UMP can be transported back by an UDP-sugar antiporter to the cytosol where it is consumed to regenerate UDP-glucose. Therefore, it positively regulates protein reglucosylation by clearing UDP from the ER lumen and by promoting the regeneration of UDP-glucose. Protein reglucosylation is essential to proper glycoprotein folding and quality control in the ER. This chain is Ectonucleoside triphosphate diphosphohydrolase 5 (Entpd5), found in Mus musculus (Mouse).